A 528-amino-acid chain; its full sequence is UDP-glucuronosyltransferase 2A2 (528 aa).

Residues 1–21 (MIKKVLQLLIFHLTLAEIVLS) form the signal peptide. The Extracellular portion of the chain corresponds to 22–494 (GNVVVWPTDG…FQYHSLDVIG (473 aa)). Residues asparagine 48 and asparagine 314 are each glycosylated (N-linked (GlcNAc...) asparagine). Residues 495–515 (FLLACVASAILLVAKCCLFIF) form a helical membrane-spanning segment. Residues 516-528 (QKVGKTGKKKKRD) lie on the Cytoplasmic side of the membrane.

This sequence belongs to the UDP-glycosyltransferase family.

It is found in the membrane. It catalyses the reaction glucuronate acceptor + UDP-alpha-D-glucuronate = acceptor beta-D-glucuronoside + UDP + H(+). The enzyme catalyses 17alpha-estradiol + UDP-alpha-D-glucuronate = 17alpha-estradiol 3-O-(beta-D-glucuronate) + UDP + H(+). The catalysed reaction is 17beta-estradiol + UDP-alpha-D-glucuronate = 17beta-estradiol 3-O-(beta-D-glucuronate) + UDP + H(+). It carries out the reaction chenodeoxycholate + UDP-alpha-D-glucuronate = chenodeoxycholoyl-24-O-(beta-D-glucuronate) + UDP. It catalyses the reaction lithocholate + UDP-alpha-D-glucuronate = lithocholoyl-24-O-(beta-D-glucuronate) + UDP. The enzyme catalyses deoxycholate + UDP-alpha-D-glucuronate = deoxycholoyl-24-O-(beta-D-glucuronate) + UDP. The catalysed reaction is hyocholate + UDP-alpha-D-glucuronate = hyocholoyl-24-O-(beta-D-glucuronate) + UDP. It carries out the reaction hyodeoxycholate + UDP-alpha-D-glucuronate = hyodeoxycholate 6-O-(beta-D-glucuronate) + UDP + H(+). Its function is as follows. UDP-glucuronosyltransferase (UGT) that catalyzes phase II biotransformation reactions in which lipophilic substrates are conjugated with glucuronic acid to increase the metabolite's water solubility, thereby facilitating excretion into either the urine or bile. Essential for the elimination and detoxification of drugs, xenobiotics and endogenous compounds. Catalyzes the glucuronidation of endogenous estrogen hormone estradiol. Contributes to bile acid (BA) detoxification by catalyzing the glucuronidation of BA substrates, which are natural detergents for dietary lipids absorption. Potential role in detoxification of toxic waste compounds in the amniotic fluid before birth, and air-born chemical after birth. The protein is UDP-glucuronosyltransferase 2A2 of Mus musculus (Mouse).